The following is a 377-amino-acid chain: MTPSEIHADERLVHVPLGERAYDILIGPGLIGRAGGEISARLKGRRAAIITDEHVAPLYLEGLMDGLQTDGIEAVSLTLPAGEKTKSFEHLVTVCDAVLSARVERNDAVIALGGGVIGDLAGFAAGIVRRGVRFVQIPTSLLSQVDSSVGGKTGINTRHGKNLVGVFHQPDLVLADTAVLDTLSPREFRAGYAEVVKYGLIDKPDFFFWLEKNWDDIRTGGPARIEAIATSCQAKADVVVADEKENGVRALLNLGHTFGHALEAATNYDSKRLVHGEGVAIGMVLAHQFSARLNLASPDDAARVEAHLKAVGLPTTMKDIPGELPPVETLMAAIAQDKKVKGGKLTFILTHGIGQSFVADDVASSEVQSFLSEKHPG.

Residues 115-119, 139-140, lysine 152, and lysine 161 each bind NAD(+); these read GVIGD and TS. Positions 194, 256, and 275 each coordinate Zn(2+).

The protein belongs to the sugar phosphate cyclases superfamily. Dehydroquinate synthase family. It depends on NAD(+) as a cofactor. Co(2+) serves as cofactor. Requires Zn(2+) as cofactor.

The protein resides in the cytoplasm. The catalysed reaction is 7-phospho-2-dehydro-3-deoxy-D-arabino-heptonate = 3-dehydroquinate + phosphate. It participates in metabolic intermediate biosynthesis; chorismate biosynthesis; chorismate from D-erythrose 4-phosphate and phosphoenolpyruvate: step 2/7. Catalyzes the conversion of 3-deoxy-D-arabino-heptulosonate 7-phosphate (DAHP) to dehydroquinate (DHQ). The polypeptide is 3-dehydroquinate synthase (Agrobacterium fabrum (strain C58 / ATCC 33970) (Agrobacterium tumefaciens (strain C58))).